The sequence spans 370 residues: Peptidoglycan glycosyltransferase MrdB (370 aa).

9 consecutive transmembrane segments (helical) span residues Met20–Gly40, Ile50–Val70, Ala75–Ile95, Ser136–Ala156, Leu160–Ser180, Leu183–Met203, Phe263–Leu283, Leu312–Val332, and Leu336–Val356.

Belongs to the SEDS family. MrdB/RodA subfamily.

It localises to the cell inner membrane. The enzyme catalyses [GlcNAc-(1-&gt;4)-Mur2Ac(oyl-L-Ala-gamma-D-Glu-L-Lys-D-Ala-D-Ala)](n)-di-trans,octa-cis-undecaprenyl diphosphate + beta-D-GlcNAc-(1-&gt;4)-Mur2Ac(oyl-L-Ala-gamma-D-Glu-L-Lys-D-Ala-D-Ala)-di-trans,octa-cis-undecaprenyl diphosphate = [GlcNAc-(1-&gt;4)-Mur2Ac(oyl-L-Ala-gamma-D-Glu-L-Lys-D-Ala-D-Ala)](n+1)-di-trans,octa-cis-undecaprenyl diphosphate + di-trans,octa-cis-undecaprenyl diphosphate + H(+). It functions in the pathway cell wall biogenesis; peptidoglycan biosynthesis. Functionally, peptidoglycan polymerase that is essential for cell wall elongation. The sequence is that of Peptidoglycan glycosyltransferase MrdB from Escherichia coli O157:H7.